A 224-amino-acid chain; its full sequence is UPF0758 protein Rpic_2712 (224 aa).

The region spanning 102–224 (TFESAQSVKD…VYGFLEHGKM (123 aa)) is the MPN domain. Positions 173, 175, and 186 each coordinate Zn(2+). The JAMM motif motif lies at 173-186 (HNHPTGNTEPSESD).

Belongs to the UPF0758 family.

This chain is UPF0758 protein Rpic_2712, found in Ralstonia pickettii (strain 12J).